We begin with the raw amino-acid sequence, 156 residues long: Ribosomal RNA large subunit methyltransferase H (156 aa).

Residues L73, G104, and 123–128 (IGPLTL) contribute to the S-adenosyl-L-methionine site.

This sequence belongs to the RNA methyltransferase RlmH family. In terms of assembly, homodimer.

It is found in the cytoplasm. The catalysed reaction is pseudouridine(1915) in 23S rRNA + S-adenosyl-L-methionine = N(3)-methylpseudouridine(1915) in 23S rRNA + S-adenosyl-L-homocysteine + H(+). In terms of biological role, specifically methylates the pseudouridine at position 1915 (m3Psi1915) in 23S rRNA. This is Ribosomal RNA large subunit methyltransferase H from Xanthomonas oryzae pv. oryzae (strain MAFF 311018).